Reading from the N-terminus, the 265-residue chain is 4-hydroxy-tetrahydrodipicolinate reductase (265 aa).

9 to 14 contacts NAD(+); sequence GARGKM. Residue Lys37 coordinates NADP(+). Residues 99 to 101 and 125 to 128 contribute to the NAD(+) site; these read GTT and APNF. The active-site Proton donor/acceptor is His155. His156 is a binding site for (S)-2,3,4,5-tetrahydrodipicolinate. Catalysis depends on Lys159, which acts as the Proton donor. A (S)-2,3,4,5-tetrahydrodipicolinate-binding site is contributed by 165 to 166; the sequence is GT.

It belongs to the DapB family.

The protein localises to the cytoplasm. It catalyses the reaction (S)-2,3,4,5-tetrahydrodipicolinate + NAD(+) + H2O = (2S,4S)-4-hydroxy-2,3,4,5-tetrahydrodipicolinate + NADH + H(+). It carries out the reaction (S)-2,3,4,5-tetrahydrodipicolinate + NADP(+) + H2O = (2S,4S)-4-hydroxy-2,3,4,5-tetrahydrodipicolinate + NADPH + H(+). It functions in the pathway amino-acid biosynthesis; L-lysine biosynthesis via DAP pathway; (S)-tetrahydrodipicolinate from L-aspartate: step 4/4. Catalyzes the conversion of 4-hydroxy-tetrahydrodipicolinate (HTPA) to tetrahydrodipicolinate. This Lysinibacillus sphaericus (strain C3-41) protein is 4-hydroxy-tetrahydrodipicolinate reductase.